A 151-amino-acid polypeptide reads, in one-letter code: MKTLEKYILFAIVLCCLLQLGQAIKCWDCRSDNDPKCGDPFDNSTLAITDCQQAPELEHLKGVRPTMCRKIRQKVHGEWRYFRSCAYMGEPGIEGDERFCLMRTGSYNIFMEFCTCNSKDGCNSAGIHRLGLMGVLTGTLLSVIVAHLLRQ.

A signal peptide spans 1–23 (MKTLEKYILFAIVLCCLLQLGQA). Residues 24–128 (IKCWDCRSDN…KDGCNSAGIH (105 aa)) lie on the Lumenal side of the membrane. Disulfide bonds link cysteine 26–cysteine 68, cysteine 29–cysteine 37, cysteine 51–cysteine 85, cysteine 100–cysteine 114, and cysteine 116–cysteine 122. The N-linked (GlcNAc...) asparagine glycan is linked to asparagine 43. A lipid anchor (GPI-anchor amidated serine) is attached at serine 124. Positions 125 to 151 (AGIHRLGLMGVLTGTLLSVIVAHLLRQ) are cleaved as a propeptide — removed in mature form. A helical membrane pass occupies residues 129 to 149 (RLGLMGVLTGTLLSVIVAHLL). Residues 150-151 (RQ) lie on the Cytoplasmic side of the membrane.

This sequence belongs to the quiver family.

The protein localises to the vesicle. Its subcellular location is the membrane. It is found in the endomembrane system. Its function is as follows. Required for septate junction assembly, possibly by organizing the preassembly and transport of septate junction proteins including dlg1/disks large 1 and Nrx-IV/Neurexin-IV. Involved in paracellular barrier functions of trachea, hindgut and salivary gland mediated by epithelial cell septate junctions. The protein is UPAR/Ly6 domain-containing protein crok of Drosophila melanogaster (Fruit fly).